Consider the following 289-residue polypeptide: Bifunctional protein FolD (289 aa).

Residues 165–167 and serine 190 contribute to the NADP(+) site; that span reads GAS.

It belongs to the tetrahydrofolate dehydrogenase/cyclohydrolase family. In terms of assembly, homodimer.

It carries out the reaction (6R)-5,10-methylene-5,6,7,8-tetrahydrofolate + NADP(+) = (6R)-5,10-methenyltetrahydrofolate + NADPH. The enzyme catalyses (6R)-5,10-methenyltetrahydrofolate + H2O = (6R)-10-formyltetrahydrofolate + H(+). The protein operates within one-carbon metabolism; tetrahydrofolate interconversion. Its function is as follows. Catalyzes the oxidation of 5,10-methylenetetrahydrofolate to 5,10-methenyltetrahydrofolate and then the hydrolysis of 5,10-methenyltetrahydrofolate to 10-formyltetrahydrofolate. This is Bifunctional protein FolD from Ralstonia nicotianae (strain ATCC BAA-1114 / GMI1000) (Ralstonia solanacearum).